A 431-amino-acid chain; its full sequence is UDP-N-acetylmuramate--L-alanine ligase (431 aa).

108–114 (GSHGKTS) lines the ATP pocket.

This sequence belongs to the MurCDEF family.

It localises to the cytoplasm. It catalyses the reaction UDP-N-acetyl-alpha-D-muramate + L-alanine + ATP = UDP-N-acetyl-alpha-D-muramoyl-L-alanine + ADP + phosphate + H(+). Its pathway is cell wall biogenesis; peptidoglycan biosynthesis. Functionally, cell wall formation. This chain is UDP-N-acetylmuramate--L-alanine ligase, found in Macrococcus caseolyticus (strain JCSC5402) (Macrococcoides caseolyticum).